Consider the following 1038-residue polypeptide: Importin-7 (1038 aa).

Met1 carries the N-acetylmethionine modification. In terms of domain architecture, Importin N-terminal spans 22–101; sequence AERQLNEAHK…RENIVEAIIH (80 aa). Residues 881–910 are disordered; the sequence is EHENDSDDDDEAEDDDETEELGSDEDDIDE. A compositionally biased stretch (acidic residues) spans 884–910; sequence NDSDDDDEAEDDDETEELGSDEDDIDE. Ser886 carries the post-translational modification Phosphoserine. Thr898 carries the post-translational modification Phosphothreonine. Ser903 and Ser1020 each carry phosphoserine.

It belongs to the importin beta family. In terms of assembly, forms a heterodimer with KPNB1. Interacts with histone H1. Interacts with H2A, H2B, H3 and H4 histones. Interacts with SNUPN and XPO1. Interacts with RPS7 and RPL5. Interacts with RPL23A (via BIB domain). Binds directly to nuclear pore complexes. Interacts with SMAD4 and NUP93; translocates SMAD4 to the nucleus through the NPC upon BMP7 stimulation resulting in activation of SMAD4 signaling. Interacts with phosphorylated SMAD2; the interaction facilitates translocation of SMAD2 to the nucleus. Interacts with SRP19. Interacts with RUNX2; the interaction inhibits RUNX2 nuclear translocation in osteoblasts. Interacts with HDAC6, DLX3 and KLF4; the interaction facilitates HDAC6, DLX3 and KLF4 nuclear translocation in dental papilla cells. (Microbial infection) Interacts with HIV-1 reverse transcription complex integrase and rev.

It localises to the cytoplasm. The protein localises to the nucleus. Its function is as follows. Functions in nuclear protein import, either by acting as autonomous nuclear transport receptor or as an adapter-like protein in association with the importin-beta subunit KPNB1. Acting autonomously, is thought to serve itself as receptor for nuclear localization signals (NLS) and to promote translocation of import substrates through the nuclear pore complex (NPC) by an energy requiring, Ran-dependent mechanism. At the nucleoplasmic side of the NPC, Ran binds to importin, the importin/substrate complex dissociates and importin is re-exported from the nucleus to the cytoplasm where GTP hydrolysis releases Ran. The directionality of nuclear import is thought to be conferred by an asymmetric distribution of the GTP- and GDP-bound forms of Ran between the cytoplasm and nucleus. Mediates autonomously the nuclear import of ribosomal proteins RPL23A, RPS7 and RPL5. In association with KPNB1 mediates the nuclear import of H1 histone and the Ran-binding site of IPO7 is not required but synergizes with that of KPNB1 in importin/substrate complex dissociation. Promotes odontoblast differentiation via promoting nuclear translocation of DLX3, KLF4, SMAD2, thereby facilitating the transcription of target genes that play a role in odontoblast differentiation. Facilitates BMP4-induced translocation of SMAD1 to the nucleus and recruitment to the MSX1 gene promoter, thereby promotes the expression of the odontogenic regulator MSX1 in dental mesenchymal cells. Also promotes odontoblast differentiation by facilitating the nuclear translocation of HDAC6 and subsequent repression of RUNX2 expression. Inhibits osteoblast differentiation by inhibiting nuclear translocation of RUNX2 and therefore inhibition of RUNX2 target gene transcription. In vitro, mediates nuclear import of H2A, H2B, H3 and H4 histones. (Microbial infection) Mediates the nuclear import of HIV-1 reverse transcription complex (RTC) integrase. Binds and mediates the nuclear import of HIV-1 Rev. In Homo sapiens (Human), this protein is Importin-7 (IPO7).